The chain runs to 84 residues: Beta-mammal toxin Cn2 (84 aa).

The N-terminal stretch at 1–16 (LLIITACLALIGTVWA) is a signal peptide. One can recognise an LCN-type CS-alpha/beta domain in the interval 17-82 (KEGYLVDKNT…VWPLPNKRCS (66 aa)). 4 disulfide bridges follow: cysteine 28–cysteine 81, cysteine 32–cysteine 57, cysteine 41–cysteine 62, and cysteine 45–cysteine 64. Serine 82 is modified (serine amide).

Belongs to the long (4 C-C) scorpion toxin superfamily. Sodium channel inhibitor family. Beta subfamily. As to expression, expressed by the venom gland.

The protein resides in the secreted. Mammal beta-toxins bind voltage-independently at site-4 of sodium channels (Nav) and shift the activation voltage to more negative potentials. This toxin is active against mammals. In Centruroides noxius (Mexican scorpion), this protein is Beta-mammal toxin Cn2.